Consider the following 222-residue polypeptide: Cytochrome b6 (222 aa).

The helical transmembrane segment at 39-59 (IFYCLGGITLVCFIIQFATGF) threads the bilayer. Residue cysteine 42 participates in heme c binding. Residues histidine 93 and histidine 107 each coordinate heme b. 3 helical membrane passes run 97–117 (ASMM…TGGF), 123–143 (LTWI…VTGY), and 193–213 (LHTF…FLMI). Residues histidine 194 and histidine 209 each contribute to the heme b site.

The protein belongs to the cytochrome b family. PetB subfamily. The 4 large subunits of the cytochrome b6-f complex are cytochrome b6, subunit IV (17 kDa polypeptide, PetD), cytochrome f and the Rieske protein, while the 4 small subunits are PetG, PetL, PetM and PetN. The complex functions as a dimer. Heme b is required as a cofactor. Heme c serves as cofactor.

Its subcellular location is the cellular thylakoid membrane. Its function is as follows. Component of the cytochrome b6-f complex, which mediates electron transfer between photosystem II (PSII) and photosystem I (PSI), cyclic electron flow around PSI, and state transitions. In Prochlorothrix hollandica, this protein is Cytochrome b6.